The primary structure comprises 206 residues: Urease accessory protein UreG (206 aa).

15–22 (GPVGSGKT) is a GTP binding site.

The protein belongs to the SIMIBI class G3E GTPase family. UreG subfamily. In terms of assembly, homodimer. UreD, UreF and UreG form a complex that acts as a GTP-hydrolysis-dependent molecular chaperone, activating the urease apoprotein by helping to assemble the nickel containing metallocenter of UreC. The UreE protein probably delivers the nickel.

It localises to the cytoplasm. In terms of biological role, facilitates the functional incorporation of the urease nickel metallocenter. This process requires GTP hydrolysis, probably effectuated by UreG. The polypeptide is Urease accessory protein UreG (Ralstonia pickettii (strain 12J)).